Reading from the N-terminus, the 349-residue chain is MLTLSDFDFPLPPELIAQSALPDRSASRLLVVERLAPGEQPDAIRLVDRAFSDIIGYLKPEDLLVFNDTRVIKARFFGQKPSGGKVEVLVERVLDTHTVLAQVRASKTPAEGSLLHLAEDAFAVTVGPRVDQFFTLRFPAPALDLIEQYGRLPLPPYITHDPDAYDETRYQTVYARNPGAVAAPTAGLHFDDALFARLDAAGVRRAFLTLHVGAGTFQPVRTENIAEHKMHSEWYAISPELADAVRETRKRGGRVIAVGTTSLRALESAAKPDGTLEAGNGDTDIFITPGYQFRLVDALITNFHLPKSTLLMLVSALAGVEAIRAAYRHAVEARYRFFSYGDAMLLTRQ.

This sequence belongs to the QueA family. As to quaternary structure, monomer.

Its subcellular location is the cytoplasm. It carries out the reaction 7-aminomethyl-7-carbaguanosine(34) in tRNA + S-adenosyl-L-methionine = epoxyqueuosine(34) in tRNA + adenine + L-methionine + 2 H(+). Its pathway is tRNA modification; tRNA-queuosine biosynthesis. Functionally, transfers and isomerizes the ribose moiety from AdoMet to the 7-aminomethyl group of 7-deazaguanine (preQ1-tRNA) to give epoxyqueuosine (oQ-tRNA). This is S-adenosylmethionine:tRNA ribosyltransferase-isomerase from Cupriavidus pinatubonensis (strain JMP 134 / LMG 1197) (Cupriavidus necator (strain JMP 134)).